Consider the following 441-residue polypeptide: Methylenetetrahydrofolate--tRNA-(uracil-5-)-methyltransferase TrmFO (441 aa).

7–12 contributes to the FAD binding site; that stretch reads GAGLSG.

The protein belongs to the MnmG family. TrmFO subfamily. FAD serves as cofactor.

It localises to the cytoplasm. It catalyses the reaction uridine(54) in tRNA + (6R)-5,10-methylene-5,6,7,8-tetrahydrofolate + NADH + H(+) = 5-methyluridine(54) in tRNA + (6S)-5,6,7,8-tetrahydrofolate + NAD(+). The catalysed reaction is uridine(54) in tRNA + (6R)-5,10-methylene-5,6,7,8-tetrahydrofolate + NADPH + H(+) = 5-methyluridine(54) in tRNA + (6S)-5,6,7,8-tetrahydrofolate + NADP(+). In terms of biological role, catalyzes the folate-dependent formation of 5-methyl-uridine at position 54 (M-5-U54) in all tRNAs. This is Methylenetetrahydrofolate--tRNA-(uracil-5-)-methyltransferase TrmFO from Pseudothermotoga lettingae (strain ATCC BAA-301 / DSM 14385 / NBRC 107922 / TMO) (Thermotoga lettingae).